The chain runs to 216 residues: Probable nicotinate-nucleotide adenylyltransferase (216 aa).

The protein belongs to the NadD family.

It catalyses the reaction nicotinate beta-D-ribonucleotide + ATP + H(+) = deamido-NAD(+) + diphosphate. It participates in cofactor biosynthesis; NAD(+) biosynthesis; deamido-NAD(+) from nicotinate D-ribonucleotide: step 1/1. Its function is as follows. Catalyzes the reversible adenylation of nicotinate mononucleotide (NaMN) to nicotinic acid adenine dinucleotide (NaAD). This is Probable nicotinate-nucleotide adenylyltransferase from Desulfatibacillum aliphaticivorans.